The chain runs to 356 residues: MYANALVCLNPSFIKLQFHIVCTMNIIGIVTLALCSAASAADEGAAYNLQRAPDYFESFVENYNKNYTSDWEKNKRYSIFKDNLHEINAKNGNATDGPTATYKINKFSDLSKSELIAKFTGLSIPERVSNFCKTIILNQPPDKGPLHFDWREQNKVTSIKNQGACGACWAFATLASVESQFAMRHNRLIDLSEQQLIDCDSVDMGCNGGLLHTAFEEIMRMGGVQTELDYPFVGRNRRCGLDRHRPYVVSLVGCYRYVMVNEEKLKDLLRAVGPIPMAIDAADIVNYYRGVISSCENNGLNHAVLLVGYGVENGVPYWVFKNTWGDDWGENGYFRVRQNVNACGMVNDLASTAVLA.

Residues 1–40 (MYANALVCLNPSFIKLQFHIVCTMNIIGIVTLALCSAASA) form the signal peptide. A propeptide spans 41 to 144 (ADEGAAYNLQ…IILNQPPDKG (104 aa)) (activation peptide). 3 disulfide bridges follow: cysteine 165-cysteine 206, cysteine 199-cysteine 239, and cysteine 295-cysteine 343. Cysteine 168 is a catalytic residue. Active-site residues include histidine 302 and asparagine 322.

The protein belongs to the peptidase C1 family. Synthesized as an inactive proenzyme and activated by proteolytic removal of the inhibitory propeptide.

It catalyses the reaction Endopeptidase of broad specificity, hydrolyzing substrates of both cathepsin L and cathepsin B.. Cysteine protease that plays an essential role in host liquefaction to facilitate horizontal transmission of the virus. May participate in the degradation of foreign protein expressed by the baculovirus system. The sequence is that of Viral cathepsin (VCATH) from Lepidoptera (butterflies and moths).